The sequence spans 515 residues: Sugar transport protein MST4 (515 aa).

The Cytoplasmic segment spans residues M1 to K17. A helical membrane pass occupies residues I18 to Y38. Over D39–Q78 the chain is Extracellular. Residues G79–S99 traverse the membrane as a helical segment. Over Y100 to R108 the chain is Cytoplasmic. A helical transmembrane segment spans residues L109–Q129. Residues N130 to R138 lie on the Extracellular side of the membrane. Residues I139–I159 form a helical membrane-spanning segment. Residues A160–R165 are Cytoplasmic-facing. Residues G166–V186 form a helical membrane-spanning segment. The Extracellular segment spans residues N187–R199. A helical transmembrane segment spans residues L200–V220. Over D221–Q280 the chain is Cytoplasmic. The helical transmembrane segment at L281–F301 threads the bilayer. Residues Y302 to D315 lie on the Extracellular side of the membrane. The chain crosses the membrane as a helical span at residues A316–V336. Topologically, residues Y337–L347 are cytoplasmic. A helical transmembrane segment spans residues L348 to I368. Over K369–H379 the chain is Extracellular. A helical transmembrane segment spans residues G380 to W400. The Cytoplasmic segment spans residues G401–S422. Residues V423–L443 form a helical membrane-spanning segment. At C444–Y448 the chain is on the extracellular side. The chain crosses the membrane as a helical span at residues A449–L469. At P470–V515 the chain is on the cytoplasmic side.

It belongs to the major facilitator superfamily. Sugar transporter (TC 2.A.1.1) family. In terms of tissue distribution, expressed in roots, shoots, leaf blades, leaf sheaths, anthers, ovaries and embryos.

It localises to the membrane. Mediates active uptake of hexoses by sugar:proton symport. Can transport glucose, fructose, mannose and galactose. Can transport xylose and ribose. The protein is Sugar transport protein MST4 of Oryza sativa subsp. japonica (Rice).